Consider the following 76-residue polypeptide: uncharacterized protein (76 aa).

Transmembrane regions (helical) follow at residues 9-29 and 45-65; these read AIGIVVHLIFIAVTWWALQAV and LLMILLTIAIGTAVANFFLDY.

The protein localises to the cell membrane. This is an uncharacterized protein from Bacillus subtilis (strain 168).